We begin with the raw amino-acid sequence, 593 residues long: ETS-related transcription factor Elf-2 (593 aa).

Residues 1 to 34 (MASAVVDSGGSALELPSDGGENQEGGDTGPDCPA) form a disordered region. S107 is modified (phosphoserine). A disordered region spans residues 146–199 (VEVSTEESEPMDASPIPTSPDSHEPMKKKKVGRKPKTQQSPVSNGSPELGIKKK). Over residues 171–181 (MKKKKVGRKPK) the composition is skewed to basic residues. Residue T182 is modified to Phosphothreonine. Polar residues predominate over residues 182 to 191 (TQQSPVSNGS). 2 positions are modified to phosphoserine: S185 and S191. The segment at residues 208–290 (TYLWEFLLDL…EGQRLVYQFK (83 aa)) is a DNA-binding region (ETS). Residues 362–383 (TSPTHDGSSRSPTTTAPVSAAA) form a disordered region. Residues S363 and S372 each carry the phosphoserine modification. Positions 370–383 (SRSPTTTAPVSAAA) are enriched in low complexity. Phosphothreonine is present on T376. At S432 the chain carries Phosphoserine. R496 carries the post-translational modification Omega-N-methylarginine. At T523 the chain carries Phosphothreonine. K538 is covalently cross-linked (Glycyl lysine isopeptide (Lys-Gly) (interchain with G-Cter in SUMO2)).

It belongs to the ETS family. Interacts with LIM domains of LMO2. Interacts via its N-terminal region with RUNX1. Expressed in all tissues examined. Highest levels in thymocytes and bone marrow.

Its subcellular location is the nucleus. Its function is as follows. Probably transcriptionally activates the LYN and BLK promoters and acts synergistically with RUNX1 to transactivate the BLK promoter. In Mus musculus (Mouse), this protein is ETS-related transcription factor Elf-2.